Consider the following 1074-residue polypeptide: Carbamoyl phosphate synthase large chain (1074 aa).

The carboxyphosphate synthetic domain stretch occupies residues 1–399 (MPKRSDIKKV…ALMKAIRSLD (399 aa)). Positions 129, 169, 175, 176, 208, 210, 215, 241, 242, 243, 284, and 296 each coordinate ATP. One can recognise an ATP-grasp 1 domain in the interval 133-325 (KKAMERIGEP…IARVTAKIAI (193 aa)). Residues Gln284, Glu296, and Asn298 each coordinate Mg(2+). 3 residues coordinate Mn(2+): Gln284, Glu296, and Asn298. Positions 400–543 (IDIDLGYNGK…YSTYDEECEL (144 aa)) are oligomerization domain. Positions 544-933 (NPSDNKKVLI…FKAEMSAENN (390 aa)) are carbamoyl phosphate synthetic domain. In terms of domain architecture, ATP-grasp 2 spans 674 to 865 (NKLLNKLGIP…LAKIAAKVMA (192 aa)). Residues Arg710, Asp749, Leu751, Glu756, Gly781, Ile782, His783, Ser784, Gln824, and Glu836 each coordinate ATP. Residues Gln824, Glu836, and Asn838 each coordinate Mg(2+). Mn(2+) contacts are provided by Gln824, Glu836, and Asn838. An MGS-like domain is found at 932–1074 (NNLPLDGIVF…YHREVRYRAL (143 aa)). An allosteric domain region spans residues 934 to 1074 (LPLDGIVFIS…YHREVRYRAL (141 aa)).

It belongs to the CarB family. In terms of assembly, composed of two chains; the small (or glutamine) chain promotes the hydrolysis of glutamine to ammonia, which is used by the large (or ammonia) chain to synthesize carbamoyl phosphate. Tetramer of heterodimers (alpha,beta)4. Mg(2+) serves as cofactor. The cofactor is Mn(2+).

The enzyme catalyses hydrogencarbonate + L-glutamine + 2 ATP + H2O = carbamoyl phosphate + L-glutamate + 2 ADP + phosphate + 2 H(+). It carries out the reaction hydrogencarbonate + NH4(+) + 2 ATP = carbamoyl phosphate + 2 ADP + phosphate + 2 H(+). It functions in the pathway amino-acid biosynthesis; L-arginine biosynthesis; carbamoyl phosphate from bicarbonate: step 1/1. The protein operates within pyrimidine metabolism; UMP biosynthesis via de novo pathway; (S)-dihydroorotate from bicarbonate: step 1/3. Its function is as follows. Large subunit of the glutamine-dependent carbamoyl phosphate synthetase (CPSase). CPSase catalyzes the formation of carbamoyl phosphate from the ammonia moiety of glutamine, carbonate, and phosphate donated by ATP, constituting the first step of 2 biosynthetic pathways, one leading to arginine and/or urea and the other to pyrimidine nucleotides. The large subunit (synthetase) binds the substrates ammonia (free or transferred from glutamine from the small subunit), hydrogencarbonate and ATP and carries out an ATP-coupled ligase reaction, activating hydrogencarbonate by forming carboxy phosphate which reacts with ammonia to form carbamoyl phosphate. The protein is Carbamoyl phosphate synthase large chain of Methanothrix thermoacetophila (strain DSM 6194 / JCM 14653 / NBRC 101360 / PT) (Methanosaeta thermophila).